The chain runs to 392 residues: Protein O-glucosyltransferase 1 (392 aa).

The N-terminal stretch at 1–23 (MELGVSSQLWLWLLLLLLPPVPG) is a signal peptide. Disulfide bonds link cysteine 49-cysteine 56, cysteine 54-cysteine 357, cysteine 102-cysteine 108, and cysteine 263-cysteine 286. Asparagine 53 carries an N-linked (GlcNAc...) asparagine glycan. The interval 103–107 (MFPSR) is interaction with the consensus sequence C-X-S-X-[PA]-C in peptide substrates. The active-site Proton donor/acceptor is the aspartate 133. Residues 172 to 178 (AVWPIYP) are interaction with the consensus sequence C-X-S-X-[PA]-C in peptide substrates. Position 177 (tyrosine 177) interacts with UDP-alpha-D-glucose. N-linked (GlcNAc...) asparagine glycosylation occurs at asparagine 204. Residues serine 212, arginine 218, and 274–279 (VAASFR) contribute to the UDP-alpha-D-glucose site. Asparagine 373 carries N-linked (GlcNAc...) asparagine glycosylation. The short motif at 389-392 (KIEL) is the Prevents secretion from ER element.

Belongs to the glycosyltransferase 90 family.

The protein resides in the endoplasmic reticulum lumen. The enzyme catalyses L-seryl-[EGF-like domain protein] + UDP-alpha-D-xylose = 3-O-(beta-D-xylosyl)-L-seryl-[EGF-like domain protein] + UDP + H(+). It catalyses the reaction L-seryl-[EGF-like domain protein] + UDP-alpha-D-glucose = 3-O-(beta-D-glucosyl)-L-seryl-[EGF-like domain protein] + UDP + H(+). The protein operates within protein modification; protein glycosylation. Its function is as follows. Dual specificity glycosyltransferase that catalyzes the transfer of glucose and xylose from UDP-glucose and UDP-xylose, respectively, to a serine residue found in the consensus sequence of C-X-S-X-P-C. Specifically targets extracellular EGF repeats of protein such as CRB2, F7, F9 and NOTCH2. Acts as a positive regulator of Notch signaling by mediating O-glucosylation of Notch, leading to regulate muscle development. Notch glucosylation does not affect Notch ligand binding. Required during early development to promote gastrulation: acts by mediating O-glucosylation of CRB2, which is required for CRB2 localization to the cell membrane. In Bos taurus (Bovine), this protein is Protein O-glucosyltransferase 1 (POGLUT1).